Here is a 347-residue protein sequence, read N- to C-terminus: 5-deoxyribose 1-phosphate isomerase (347 aa).

Substrate contacts are provided by residues 48–50, R91, and Q198; that span reads RGA. D239 serves as the catalytic Proton donor. 249 to 250 is a substrate binding site; it reads NK.

This sequence belongs to the EIF-2B alpha/beta/delta subunits family. DrdI subfamily.

It catalyses the reaction 5-deoxy-alpha-D-ribose 1-phosphate = 5-deoxy-D-ribulose 1-phosphate. It participates in carbohydrate degradation. Its function is as follows. Catalyzes the isomerization of 5-deoxy-alpha-D-ribose 1-phosphate to 5-deoxy-D-ribulose 1-phosphate, as part of a 5-deoxyribose salvage pathway that recycles this toxic radical SAM enzyme by-product to mainstream metabolites. In Bacillus cereus (strain ATCC 14579 / DSM 31 / CCUG 7414 / JCM 2152 / NBRC 15305 / NCIMB 9373 / NCTC 2599 / NRRL B-3711), this protein is 5-deoxyribose 1-phosphate isomerase.